Here is a 686-residue protein sequence, read N- to C-terminus: Rhophilin-2 (686 aa).

An REM-1 domain is found at N26–V100. The interval Q46–N66 is interaction with Rho. In terms of domain architecture, BRO1 spans P111–E460. Positions R515–L593 constitute a PDZ domain. T655 is modified (phosphothreonine).

It belongs to the RHPN family. As to quaternary structure, interacts with GTP-bound RhoA and RhoB. Interacts with both GTP- and GDP-bound RhoA. According to PubMed:12473120, it does not interact with RhoA. Interacts with KRT18. As to expression, widely expressed. Highly expressed in prostate, trachea, stomach, colon, thyroid and pancreas. Expressed at lower level in brain, spinal cord, kidney, placenta and liver.

It is found in the cytoplasm. Its subcellular location is the perinuclear region. Binds specifically to GTP-Rho. May function in a Rho pathway to limit stress fiber formation and/or increase the turnover of F-actin structures in the absence of high levels of RhoA activity. This is Rhophilin-2 (RHPN2) from Homo sapiens (Human).